The primary structure comprises 267 residues: tRNA pseudouridine synthase A (267 aa).

Residue D51 is the Nucleophile of the active site. Y109 is a substrate binding site.

This sequence belongs to the tRNA pseudouridine synthase TruA family. As to quaternary structure, homodimer.

The catalysed reaction is uridine(38/39/40) in tRNA = pseudouridine(38/39/40) in tRNA. Formation of pseudouridine at positions 38, 39 and 40 in the anticodon stem and loop of transfer RNAs. In Staphylococcus aureus (strain Mu3 / ATCC 700698), this protein is tRNA pseudouridine synthase A.